We begin with the raw amino-acid sequence, 1992 residues long: Fer-1-like protein 4 (1992 aa).

3 consecutive C2 domains span residues 1–97 (MALT…VLRE), 214–330 (PRGD…QKWA), and 369–502 (TSSD…AGFN). Over 1-1952 (MALTVCVRHL…PLKTFIFFIW (1952 aa)) the chain is Extracellular. 3 disordered regions span residues 554–606 (RVEP…APEI), 661–686 (AGRQ…LEVQ), and 691–710 (SEDR…PAQW). The span at 559 to 569 (PSQTTQRSGLS) shows a compositional bias: polar residues. Positions 572 to 581 (TGKKKKKKEK) are enriched in basic residues. C2 domains are found at residues 951–1078 (PSSG…ELQF) and 1126–1250 (ISGH…PQEE). 2 disordered regions span residues 1245–1276 (EDPQ…EAGT) and 1322–1361 (FQGQ…SKVS). Acidic residues-rich tracts occupy residues 1247–1257 (PQEEEETEEET) and 1328–1337 (SDDEMDEAGD). 2 C2 domains span residues 1430-1549 (SFSE…ANCG) and 1675-1824 (VPAP…EHCS). Residues Asp-1464, Asp-1470, Asp-1519, Asp-1521, Asp-1527, Asp-1795, Ser-1798, and Asp-1801 each contribute to the Ca(2+) site. The interval 1862–1885 (EAREAQAGKKRKRKRRAGRPEDLE) is disordered. A compositionally biased stretch (basic residues) spans 1869 to 1878 (GKKRKRKRRA). Residues 1953–1973 (RRYWRILVLLLLALITIFLLL) form a helical membrane-spanning segment. The Cytoplasmic segment spans residues 1974–1992 (VFYTIPGQISEVIFSPVHK).

Ca(2+) serves as cofactor.

It is found in the membrane. The protein is Fer-1-like protein 4 (Fer1l4) of Mus musculus (Mouse).